Reading from the N-terminus, the 679-residue chain is MKLSLPALRNTPWFKATSGQWRYALRNTIAMCLALTFAYYLNLDEPYWAMTSAAVVSFPTVGGVISKSLGRIAGSLLGATAALIIAGHTLNEPWLFLFSMAAWIGFCTWACAHFTNNAAYAFQLSGYTAAIIAFPMVNIVEITQLWDIAQARVCEVIVGILCGGMMMMILPSTSDGTALLTAFKNMHARLLEHASLLWQPETTDAIRSAHEGVIGQILTMNLLRIQAFWSHYRFRRQNALLNALLHQQLRLTSVISSLRRMLLNWPTPPENSREVIEQLLAELAKPRADSYTVAQIIAPLRPQDEQDYRHLAFWQRLRYFCQLYLRSSRQLYLIESGAPVDQIHIRRTPGLARHTDNAEAIWSGVRTFCTLTVIGAWSIGAQWESGPGALTLAAISCVLYSIVATPFKSLSLLMRTLVLLSLFSFVVKFGLMVQITDLWQFLLFLFPLFVTMQLLKLQMPKLAGLWGQLIVFMGSFIAVTNPPVYDFADFLNDNTAKIVGVAISWLAFAILRPGSDAVKSRRHIRALRRDFVDQLSRHPSHNESEFESLTYHHVSQLSNSQDALARRWLLRWGVVLLNCSHVVWQLRAWESRSDPLSRVRDICISLLRDVMSERGVQQRPLAVTLQELQRICDTLAHHHQPAAHELAAIIWRLHCSLSQLEQAPAQGTLAPGYLMTPQA.

12 consecutive transmembrane segments (helical) span residues 23-41 (YALR…AYYL), 46-65 (PYWA…GGVI), 72-90 (IAGS…GHTL), 94-113 (WLFL…ACAH), 120-142 (YAFQ…IVEI), 157-179 (IVGI…GTAL), 362-381 (WSGV…SIGA), 385-404 (SGPG…SIVA), 411-433 (SLLM…GLMV), 438-455 (LWQF…MQLL), 462-481 (LAGL…AVTN), and 496-515 (AKIV…RPGS).

This sequence belongs to the aromatic acid exporter ArAE (TC 2.A.85) family.

It localises to the cell membrane. This is an uncharacterized protein from Salmonella typhimurium (strain LT2 / SGSC1412 / ATCC 700720).